The primary structure comprises 416 residues: MAFLILVTLALASAHYSGEHFEGEKVFRVNVEDENHINLLHTLASTTQIDFWKPDSVTQIKPHSTADFRVKAEDILTVEDFLKQNELHYEVLINNLRLVLEGQFGRQVPATGHSYEKYNRWETIEAWTQQVTSENPDLISRRSIGTTFEGRTIYLLKVGKAGQNKPAIFMDCGFHAREWISPAFWQWFVREXIRTYGQEIHMTELLDKLDFYVLPVGNIDGYVYTWTKNRMWRKTRSTQVGTNCVGTDPTRNFDAGWCKIGASRNPCDETYCGPAAESEKETKALANFIRSNLSSIKAYLTIHSYSQMMLYPYSYDYKLTENNAELNALAKATVKELATLHGTKYTYGPGATTIYPAAGGSDDWAYDQGIKYSFTFELRDKGRYGFALPESQISPTCEETLLAIKHLARYVLQHLY.

Positions 1 to 15 are cleaved as a signal peptide; the sequence is MAFLILVTLALASAH. Residues 16 to 109 constitute a propeptide, activation peptide; the sequence is YSGEHFEGEK…LEGQFGRQVP (94 aa). The 295-residue stretch at 117–411 folds into the Peptidase M14 domain; sequence KYNRWETIEA…LAIKHLARYV (295 aa). 2 residues coordinate Zn(2+): His175 and Glu178. Substrate contacts are provided by residues 175–178, Arg233, and 250–251; these read HARE and TR. 2 disulfide bridges follow: Cys244/Cys267 and Cys258/Cys272. Position 303 (His303) interacts with Zn(2+). Substrate-binding positions include 304-305 and Tyr355; that span reads SY. Residue Glu377 is the Proton donor/acceptor of the active site.

This sequence belongs to the peptidase M14 family. Requires Zn(2+) as cofactor.

It is found in the secreted. It localises to the zymogen granule lumen. It carries out the reaction Preferential release of a C-terminal lysine or arginine amino acid.. The sequence is that of Carboxypeptidase B (CPB1) from Canis lupus familiaris (Dog).